Consider the following 223-residue polypeptide: Protein FAM3D (223 aa).

A signal peptide spans 1–25 (MRVAGLIRVVVFIFTIVTMWVFLRS). Intrachain disulfides connect Cys-54–Cys-82 and Cys-60–Cys-217. The GG-type lectin domain maps to 62–221 (NNFFAFKISS…LELEGCVPRK (160 aa)). An N-linked (GlcNAc...) asparagine glycan is attached at Asn-106.

This sequence belongs to the FAM3 family.

It localises to the secreted. This chain is Protein FAM3D, found in Mus musculus (Mouse).